We begin with the raw amino-acid sequence, 200 residues long: Tegument protein UL55 homolog (200 aa).

Basic and acidic residues predominate over residues 1–20 (MLPANRAEHSSDAEPRDIGS). The segment at 1–23 (MLPANRAEHSSDAEPRDIGSHGR) is disordered.

It belongs to the alphaherpesvirinae HHV-1 UL55 family.

The protein localises to the virion tegument. It is found in the host nucleus matrix. In Equine herpesvirus 1 (strain Ab4p) (EHV-1), this protein is Tegument protein UL55 homolog.